The chain runs to 255 residues: tRNA (guanine-N(7)-)-methyltransferase (255 aa).

Positions 1–37 are disordered; the sequence is MTAAASDPHNPRSSADDTASPRCESGQGSFFGRRKGH. Glu80, Glu105, Asp132, and Asp154 together coordinate S-adenosyl-L-methionine. The active site involves Asp154. 2 residues coordinate substrate: Lys158 and Asp190.

Belongs to the class I-like SAM-binding methyltransferase superfamily. TrmB family.

It carries out the reaction guanosine(46) in tRNA + S-adenosyl-L-methionine = N(7)-methylguanosine(46) in tRNA + S-adenosyl-L-homocysteine. It participates in tRNA modification; N(7)-methylguanine-tRNA biosynthesis. Catalyzes the formation of N(7)-methylguanine at position 46 (m7G46) in tRNA. This chain is tRNA (guanine-N(7)-)-methyltransferase, found in Nitrobacter hamburgensis (strain DSM 10229 / NCIMB 13809 / X14).